A 465-amino-acid chain; its full sequence is 2-halobenzoate 1,2-dioxygenase large subunit (465 aa).

Positions 56–154 (WVFLAHESQV…GFNVDGSHDL (99 aa)) constitute a Rieske domain. The [2Fe-2S] cluster site is built by cysteine 98, histidine 100, cysteine 118, and histidine 121. Residues histidine 227 and histidine 232 each contribute to the Fe cation site.

It belongs to the bacterial ring-hydroxylating dioxygenase alpha subunit family. Heterohexamer of 3 large (CbdA) subunits and 3 small (CbdB) subunits. The heterohexamer is part of 2-halobenzoate dioxygenase two component enzyme system. The other component is a NADH:acceptor reductase (CdbC). [2Fe-2S] cluster serves as cofactor. Fe(2+) is required as a cofactor.

The enzyme catalyses a 2-halobenzoate + NADH + O2 + H(+) = a halide anion + catechol + CO2 + NAD(+). It participates in xenobiotic degradation; benzoate degradation via CoA ligation. Its function is as follows. Component of 2-halobenzoate dioxygenase multicomponent enzyme system which catalyzes the incorporation of both atoms of molecular oxygen into 2-halobenzoate to form catechol. This is 2-halobenzoate 1,2-dioxygenase large subunit (cbdA) from Burkholderia cepacia (Pseudomonas cepacia).